The sequence spans 376 residues: Copper-containing nitrite reductase (376 aa).

Positions Met1–Ala33 form a signal peptide, tat-type signal. 2 Plastocyanin-like domains span residues Met98 to Leu193 and Gly258 to Thr359. Residues His131, His136, His171, Cys172, His181, Met186, and His342 each contribute to the Cu cation site.

The protein belongs to the multicopper oxidase family. Homotrimer. Requires Cu(2+) as cofactor. It depends on Cu(+) as a cofactor. FAD serves as cofactor. Post-translationally, predicted to be exported by the Tat system. The position of the signal peptide cleavage has not been experimentally proven.

It localises to the periplasm. The enzyme catalyses nitric oxide + Fe(III)-[cytochrome c] + H2O = Fe(II)-[cytochrome c] + nitrite + 2 H(+). The protein operates within nitrogen metabolism; nitrate reduction (denitrification); dinitrogen from nitrate: step 2/4. The sequence is that of Copper-containing nitrite reductase (nirK) from Rhizobium meliloti (strain 1021) (Ensifer meliloti).